The sequence spans 848 residues: Adenylate cyclase (848 aa).

The segment at 1-535 is catalytic; it reads MYLYIETLKQ…DISHHFPLRL (535 aa). A regulatory region spans residues 541–848; it reads KALYSPCEIR…SQPAQQFQLH (308 aa).

This sequence belongs to the adenylyl cyclase class-1 family.

Its subcellular location is the cytoplasm. The catalysed reaction is ATP = 3',5'-cyclic AMP + diphosphate. Its activity is regulated as follows. The regulatory domain is involved in the regulation of cyclase activity by the carbon source. The chain is Adenylate cyclase (cya) from Yersinia intermedia.